A 417-amino-acid chain; its full sequence is Tyrosine--tRNA ligase (417 aa).

Tyrosine 34 contributes to the L-tyrosine binding site. The short motif at 39-48 (PTAKSIHIGN) is the 'HIGH' region element. L-tyrosine-binding residues include tyrosine 165 and glutamine 169. The 'KMSKS' region motif lies at 227-231 (KFGKS). Residue lysine 230 coordinates ATP. An S4 RNA-binding domain is found at 349–416 (TDVVELLVKD…GKKKYFLAKV (68 aa)).

It belongs to the class-I aminoacyl-tRNA synthetase family. TyrS type 1 subfamily. In terms of assembly, homodimer.

It is found in the cytoplasm. It catalyses the reaction tRNA(Tyr) + L-tyrosine + ATP = L-tyrosyl-tRNA(Tyr) + AMP + diphosphate + H(+). Functionally, catalyzes the attachment of tyrosine to tRNA(Tyr) in a two-step reaction: tyrosine is first activated by ATP to form Tyr-AMP and then transferred to the acceptor end of tRNA(Tyr). The polypeptide is Tyrosine--tRNA ligase (Oenococcus oeni (strain ATCC BAA-331 / PSU-1)).